A 163-amino-acid chain; its full sequence is Small ribosomal subunit protein uS7 (163 aa).

This sequence belongs to the universal ribosomal protein uS7 family. As to quaternary structure, part of the 30S ribosomal subunit. Contacts proteins S9 and S11.

Its function is as follows. One of the primary rRNA binding proteins, it binds directly to 16S rRNA where it nucleates assembly of the head domain of the 30S subunit. Is located at the subunit interface close to the decoding center, probably blocks exit of the E-site tRNA. The protein is Small ribosomal subunit protein uS7 of Rickettsia bellii (strain RML369-C).